Here is a 62-residue protein sequence, read N- to C-terminus: Photosystem II reaction center protein Z (62 aa).

2 consecutive transmembrane segments (helical) span residues 8–28 and 41–61; these read SVFA…VVLA and FSGA…NSLI.

It belongs to the PsbZ family. PSII is composed of 1 copy each of membrane proteins PsbA, PsbB, PsbC, PsbD, PsbE, PsbF, PsbH, PsbI, PsbJ, PsbK, PsbL, PsbM, PsbT, PsbY, PsbZ, Psb30/Ycf12, at least 3 peripheral proteins of the oxygen-evolving complex and a large number of cofactors. It forms dimeric complexes.

It is found in the plastid. It localises to the chloroplast thylakoid membrane. May control the interaction of photosystem II (PSII) cores with the light-harvesting antenna, regulates electron flow through the 2 photosystem reaction centers. PSII is a light-driven water plastoquinone oxidoreductase, using light energy to abstract electrons from H(2)O, generating a proton gradient subsequently used for ATP formation. The chain is Photosystem II reaction center protein Z from Psilotum nudum (Whisk fern).